The sequence spans 389 residues: Zinc finger C2HC domain-containing protein 1C homolog (389 aa).

Disordered stretches follow at residues 16 to 44 and 84 to 115; these read MLPH…SQQS and SYPH…GPQS. Composition is skewed to polar residues over residues 35–44 and 90–102; these read YEQGDSSQQS and GISQ…DSQG. A coiled-coil region spans residues 211–266; that stretch reads VQIRRLEAAGESLEEEIRRKQILLRGKLKKTEEELRRIQMQKEQAKENENRELQKI. Disordered stretches follow at residues 301 to 320 and 343 to 389; these read REDE…QLSD and SELS…PQLG. The span at 307–317 shows a compositional bias: polar residues; it reads GRSQQNSSPFQ. Residues 368–382 show a composition bias toward low complexity; it reads SSLSMAPDSSGSSGS.

It belongs to the ZC2HC1 family.

In Pongo abelii (Sumatran orangutan), this protein is Zinc finger C2HC domain-containing protein 1C homolog (ZC2HC1C).